Reading from the N-terminus, the 713-residue chain is Calpastatin (713 aa).

Disordered regions lie at residues 1–187 (MNPT…LDPM) and 211–506 (DKKE…PVLP). The segment covering 21 to 30 (PNKKRHKKQA) has biased composition (basic residues). Residue Lys-32 forms a Glycyl lysine isopeptide (Lys-Gly) (interchain with G-Cter in SUMO2) linkage. Positions 46–63 (VVHEKKTQEVKPKEHPEP) are enriched in basic and acidic residues. An N6-acetyllysine modification is found at Lys-50. Positions 85–94 (SRSNEQPTSE) are enriched in polar residues. A phosphoserine mark is found at Ser-87 and Ser-134. Thr-136 carries the phosphothreonine modification. An Inhibitory domain 1 repeat occupies 171-223 (TEEDNTTYTGPEVLDPMSSTYIEELGKREVTLPPKYRELLDKKEGIPVPPPDT). Ser-244 bears the Phosphoserine mark. Composition is skewed to basic and acidic residues over residues 248-258 (DGKKTEKEKST), 304-332 (RKSE…KKCG), and 342-367 (YRLK…KPLS). Residues 307 to 359 (EPELDLSSIKEIDEAKAKEEKLKKCGEDDETVPPEYRLKPAMDKDGKPLLPEA) form an Inhibitory domain 2 repeat. Ser-367, Ser-369, and Ser-376 each carry phosphoserine. Over residues 370 to 379 (ELIDELSEDF) the composition is skewed to acidic residues. Over residues 380 to 397 (DQSKRKEKQSKPTEKTKE) the composition is skewed to basic and acidic residues. A Phosphoserine modification is found at Ser-441. A compositionally biased stretch (basic and acidic residues) spans 443-502 (GKKEADPEDGKPVEDKVKEKAKEEDREKLGEKEETIPPDYRLEEVKDKDGKTLPHKDPKE). The Inhibitory domain 3 repeat unit spans residues 447–500 (ADPEDGKPVEDKVKEKAKEEDREKLGEKEETIPPDYRLEEVKDKDGKTLPHKDP). Phosphoserine occurs at positions 517 and 528. The segment at 536–713 (SAAVSEVVSQ…KQKSDGKSTS (178 aa)) is disordered. The span at 542–553 (VVSQTSAPTTHS) shows a compositional bias: polar residues. A phosphoserine mark is found at Ser-575 and Ser-577. Residues 583-636 (PDPDENKPIEDKVKEKAEAEHRDKLGERDDTIPPEYRHLLDKDEEGKSTKPPTK) form an Inhibitory domain 4 repeat. Basic and acidic residues-rich tracts occupy residues 583–646 (PDPD…KPEA) and 691–713 (KAKD…KSTS).

The protein belongs to the protease inhibitor I27 (calpastatin) family.

In terms of biological role, specific inhibition of calpain (calcium-dependent cysteine protease). Plays a key role in postmortem tenderization of meat and have been proposed to be involved in muscle protein degradation in living tissue. The protein is Calpastatin (CAST) of Sus scrofa (Pig).